A 458-amino-acid polypeptide reads, in one-letter code: Vasoactive intestinal polypeptide receptor 1 (458 aa).

The first 31 residues, 1–31 (MRPLSPPPAGWFCVLAGVLACVLGPVGSWAV), serve as a signal peptide directing secretion. Over 32-142 (GLQQEECDYL…DEQQTVFYNS (111 aa)) the chain is Extracellular. Disulfide bonds link Cys38/Cys209, Cys51/Cys73, Cys64/Cys106, Cys87/Cys123, and Cys216/Cys286. N-linked (GlcNAc...) asparagine glycans are attached at residues Asn59, Asn70, Asn101, and Asn105. Residues 143–167 (VKTGYTIGYSLSLAALLVATAILSL) form a helical membrane-spanning segment. The Cytoplasmic segment spans residues 168–175 (FRKLHCTR). The chain crosses the membrane as a helical span at residues 176–197 (NYIHMHLFISFILRATAVFIKD). The Extracellular portion of the chain corresponds to 198-217 (LALFDSEESDHCSKGSVGCK). The helical transmembrane segment at 218–242 (AAVVLFQYCVMANFFWLLVEGLYLH) threads the bilayer. At 243–255 (TLLAVSFFSERKY) the chain is on the cytoplasmic side. The chain crosses the membrane as a helical span at residues 256-277 (FWGYIFVGWGVPSTFIMVWTVV). Residues 278-292 (RIHFEDYGCWDTIHS) are Extracellular-facing. A helical membrane pass occupies residues 293–317 (SLWWIIKAPILASILVNFILFIRII). Topologically, residues 318–339 (GILVQKLRPPDVGKSDNSPYSR) are cytoplasmic. The helical transmembrane segment at 340-360 (LAKSTLLLIPLFGVHYIMFAF) threads the bilayer. Residues 361–368 (FPDNFKAE) are Extracellular-facing. The helical transmembrane segment at 369-392 (VKMVFELIVGSFQGCVVAILYCFL) threads the bilayer. Residues 393 to 458 (NGEVQAELRR…SSFQAEVSLV (66 aa)) lie on the Cytoplasmic side of the membrane.

Belongs to the G-protein coupled receptor 2 family. Interacts with ADCYAP1/PACAP; activated by both PACAP27 and PACAP38 neuropeptides. Interacts with VIP; the interaction results in VIPR1 activation.

The protein localises to the cell membrane. G protein-coupled receptor activated by the neuropeptides vasoactive intestinal peptide (VIP) and pituitary adenylate cyclase-activating polypeptide (ADCYAP1/PACAP). Binds VIP and both PACAP27 and PACAP38 bioactive peptides with the following order of ligand affinity VIP = PACAP27 &gt; PACAP38. Ligand binding causes a conformation change that triggers signaling via guanine nucleotide-binding proteins (G proteins) and modulates the activity of downstream effectors. Activates cAMP-dependent pathway. The protein is Vasoactive intestinal polypeptide receptor 1 (VIPR1) of Sus scrofa (Pig).